The chain runs to 298 residues: CD-NTase-associated protein 6 (298 aa).

ATP-binding positions include 80–85 and 204–205; these read GTGKTA and RR.

This sequence belongs to the AAA ATPase family. Homohexamer, forms a 1:1:6 CdnC:Cap7:Cap6 complex.

Its function is as follows. Regulates complex assembly in a CBASS antivirus system. CBASS (cyclic oligonucleotide-based antiphage signaling system) provides immunity against bacteriophage. The CD-NTase protein synthesizes cyclic nucleotides in response to infection; these serve as specific second messenger signals. The signals activate a diverse range of effectors, leading to bacterial cell death and thus abortive phage infection. A type III CBASS system. Expression of this CBASS system (Cap18-Cap6-Cap7-CdnC-CapW-Cap17) in a susceptible E.coli (strain MG1655) confers resistance to bacteriophage P1. Binds and disassembles an active CdnC:Cap7 complex, inhibiting the complex's ability to synthesize cyclic nucleotide second messengers. An AAA+-ATPase remodeler, in the absence of foreign threat Cap6 probably maintains the Cap7 protein in its open, inactive state. Once activated (presumably by a bacteriophage protein) Cap7 binds to and activates its cognate CD-NTase (CdnC in this bacteria) to synthesize a cyclic nucleotide second messenger which leads to abortive phage infection. This is CD-NTase-associated protein 6 from Escherichia coli (strain KTE188).